Reading from the N-terminus, the 366-residue chain is 3-dehydroquinate synthase (366 aa).

NAD(+)-binding positions include 74-79, 108-112, 132-133, Lys144, Lys153, and 171-174; these read SGEAAK, GVVGD, TT, and FLRT. Residues Glu186, His249, and His266 each coordinate Zn(2+).

The protein belongs to the sugar phosphate cyclases superfamily. Dehydroquinate synthase family. Requires Co(2+) as cofactor. Zn(2+) is required as a cofactor. The cofactor is NAD(+).

It is found in the cytoplasm. It catalyses the reaction 7-phospho-2-dehydro-3-deoxy-D-arabino-heptonate = 3-dehydroquinate + phosphate. Its pathway is metabolic intermediate biosynthesis; chorismate biosynthesis; chorismate from D-erythrose 4-phosphate and phosphoenolpyruvate: step 2/7. Catalyzes the conversion of 3-deoxy-D-arabino-heptulosonate 7-phosphate (DAHP) to dehydroquinate (DHQ). The sequence is that of 3-dehydroquinate synthase from Geobacillus kaustophilus (strain HTA426).